A 256-amino-acid polypeptide reads, in one-letter code: Type III pantothenate kinase (256 aa).

Position 6–13 (6–13 (DIGNSSIV)) interacts with ATP. Substrate contacts are provided by residues tyrosine 101 and 108-111 (GADR). Residue aspartate 110 is the Proton acceptor of the active site. Aspartate 130 lines the K(+) pocket. Residue threonine 133 participates in ATP binding. Threonine 185 is a substrate binding site.

This sequence belongs to the type III pantothenate kinase family. In terms of assembly, homodimer. The cofactor is NH4(+). Requires K(+) as cofactor.

The protein resides in the cytoplasm. The enzyme catalyses (R)-pantothenate + ATP = (R)-4'-phosphopantothenate + ADP + H(+). It participates in cofactor biosynthesis; coenzyme A biosynthesis; CoA from (R)-pantothenate: step 1/5. Its function is as follows. Catalyzes the phosphorylation of pantothenate (Pan), the first step in CoA biosynthesis. This chain is Type III pantothenate kinase, found in Shouchella clausii (strain KSM-K16) (Alkalihalobacillus clausii).